Consider the following 144-residue polypeptide: L-fucose mutarotase (144 aa).

Residue His22 is the Proton donor of the active site. Substrate is bound by residues Asp30, Arg109, and 131-133 (YGN).

The protein belongs to the RbsD / FucU family. FucU mutarotase subfamily. As to quaternary structure, homodecamer.

The protein localises to the cytoplasm. The catalysed reaction is alpha-L-fucose = beta-L-fucose. Its pathway is carbohydrate metabolism; L-fucose metabolism. In terms of biological role, involved in the anomeric conversion of L-fucose. The sequence is that of L-fucose mutarotase from Haemophilus influenzae (strain 86-028NP).